The sequence spans 363 residues: Ly6/PLAUR domain-containing protein 3 (363 aa).

A signal peptide spans 1–32 (MDAARRGDTQPVMWTTGWLLLLPLLLCEGAQA). Positions 35 to 128 (CYSCVQKADD…LNLTLRGLNP (94 aa)) constitute a UPAR/Ly6 1 domain. 4 N-linked (GlcNAc...) asparagine glycosylation sites follow: asparagine 120, asparagine 131, asparagine 178, and asparagine 185. In terms of domain architecture, UPAR/Ly6 2 spans 142 to 224 (CYSCVGLSRE…GSCCQGPRCN (83 aa)). Residues 238–248 (PPLVLLPPPTT) show a composition bias toward pro residues. Disordered regions lie at residues 238-287 (PPLV…TSPH) and 301-336 (LSGG…GGAQ). Residues 249–278 (AAPSTRAQNSSSTTSTAAPTTTTSIIKPTT) show a composition bias toward low complexity. Residues 304–318 (GAAGHGGTAGHGGAA) are compositionally biased toward gly residues. A compositionally biased stretch (basic and acidic residues) spans 320–330 (HQDRSNMEKYP). The GPI-anchor amidated serine moiety is linked to residue serine 343. A propeptide spans 344–363 (GTLGSWLSAVLLTVVAGAML) (removed in mature form).

Binds laminin-1 and laminin-5. Interacts with LGALS3. Interacts with AGR2 and AGR3.

Its subcellular location is the cell membrane. Functionally, supports cell migration. May be involved in tumor progression. The protein is Ly6/PLAUR domain-containing protein 3 (Lypd3) of Mus musculus (Mouse).